Reading from the N-terminus, the 291-residue chain is Acetylglutamate kinase (291 aa).

Substrate-binding positions include 61 to 62 (GG), R83, and N187.

It belongs to the acetylglutamate kinase family. ArgB subfamily.

The protein resides in the cytoplasm. It catalyses the reaction N-acetyl-L-glutamate + ATP = N-acetyl-L-glutamyl 5-phosphate + ADP. It participates in amino-acid biosynthesis; L-arginine biosynthesis; N(2)-acetyl-L-ornithine from L-glutamate: step 2/4. Catalyzes the ATP-dependent phosphorylation of N-acetyl-L-glutamate. The polypeptide is Acetylglutamate kinase (Methanoregula boonei (strain DSM 21154 / JCM 14090 / 6A8)).